A 146-amino-acid polypeptide reads, in one-letter code: Large ribosomal subunit protein uL23B (146 aa).

Positions 1–22 (MAPSSNKVGKAIQAKKAVVKGS) are disordered.

It belongs to the universal ribosomal protein uL23 family.

In terms of biological role, this protein binds to a specific region on the 26S rRNA. In Caenorhabditis elegans, this protein is Large ribosomal subunit protein uL23B (rpl-23A.2).